Reading from the N-terminus, the 213-residue chain is ATP synthase peripheral stalk subunit OSCP, mitochondrial (213 aa).

The transit peptide at 1 to 23 (MAAPAASGLSRQVRSFSTSVVRP) directs the protein to the mitochondrion. The SIFI-degron signature appears at 5-23 (AASGLSRQVRSFSTSVVRP). Lys-54, Lys-60, Lys-70, and Lys-73 each carry N6-acetyllysine. Residue Lys-90 is modified to N6-succinyllysine. 3 positions are modified to N6-acetyllysine; alternate: Lys-100, Lys-158, and Lys-162. Lys-100, Lys-158, and Lys-162 each carry N6-succinyllysine; alternate. An N6-acetyllysine mark is found at Lys-172, Lys-176, and Lys-192. Residue Lys-199 is modified to N6-succinyllysine.

Belongs to the ATPase delta chain family. As to quaternary structure, component of the ATP synthase complex composed at least of ATP5F1A/subunit alpha, ATP5F1B/subunit beta, ATP5MC1/subunit c (homooctomer), MT-ATP6/subunit a, MT-ATP8/subunit 8, ATP5ME/subunit e, ATP5MF/subunit f, ATP5MG/subunit g, ATP5MK/subunit k, ATP5MJ/subunit j, ATP5F1C/subunit gamma, ATP5F1D/subunit delta, ATP5F1E/subunit epsilon, ATP5PF/subunit F6, ATP5PB/subunit b, ATP5PD/subunit d, ATP5PO/subunit OSCP. ATP synthase complex consists of a soluble F(1) head domain (subunits alpha(3) and beta(3)) - the catalytic core - and a membrane F(0) domain - the membrane proton channel (subunits c, a, 8, e, f, g, k and j). These two domains are linked by a central stalk (subunits gamma, delta, and epsilon) rotating inside the F1 region and a stationary peripheral stalk (subunits F6, b, d, and OSCP). In terms of processing, acetylation of Lys-70 and Lys-158 is observed in liver mitochondria from fasted mice but not from fed mice. Post-translationally, acetylation at Lys-162 decreases ATP production. Deacetylated by SIRT3. In response to mitochondrial stress, the precursor protein is ubiquitinated by the SIFI complex in the cytoplasm before mitochondrial import, leading to its degradation. Within the SIFI complex, UBR4 initiates ubiquitin chain that are further elongated or branched by KCMF1.

The protein localises to the mitochondrion. It is found in the mitochondrion inner membrane. In terms of biological role, subunit OSCP, of the mitochondrial membrane ATP synthase complex (F(1)F(0) ATP synthase or Complex V) that produces ATP from ADP in the presence of a proton gradient across the membrane which is generated by electron transport complexes of the respiratory chain. ATP synthase complex consist of a soluble F(1) head domain - the catalytic core - and a membrane F(1) domain - the membrane proton channel. These two domains are linked by a central stalk rotating inside the F(1) region and a stationary peripheral stalk. During catalysis, ATP synthesis in the catalytic domain of F(1) is coupled via a rotary mechanism of the central stalk subunits to proton translocation. In vivo, can only synthesize ATP although its ATP hydrolase activity can be activated artificially in vitro. Part of the complex F(0) domain. Part of the complex F(0) domain and the peripheric stalk, which acts as a stator to hold the catalytic alpha(3)beta(3) subcomplex and subunit a/ATP6 static relative to the rotary elements. The protein is ATP synthase peripheral stalk subunit OSCP, mitochondrial of Mus musculus (Mouse).